Here is a 198-residue protein sequence, read N- to C-terminus: MVNYPHKVSSQKRQTSLSQPKNFANRGMSFEKMINATNDYYLSQGLAVIHKKPTPIQIVQVDYPQRSRAKIVEAYFRQASTTDYSGVYNGYYIDFEVKETKQKRAIPMKNFHPHQIQHMEQVLAQQGICFVLLHFSSQQETYLLPAFDLIRFYHQDKGQKSMPLEYIREYGYEIKAGAFPQIPYLNVIKEHLLGGKTR.

The segment at 1-22 (MVNYPHKVSSQKRQTSLSQPKN) is disordered. Over residues 11-22 (QKRQTSLSQPKN) the composition is skewed to polar residues. Residues threonine 81, aspartate 83, glutamate 96, and glutamine 115 each contribute to the Mg(2+) site.

It belongs to the RecU family. Mg(2+) serves as cofactor.

It localises to the cytoplasm. It catalyses the reaction Endonucleolytic cleavage at a junction such as a reciprocal single-stranded crossover between two homologous DNA duplexes (Holliday junction).. Endonuclease that resolves Holliday junction intermediates in genetic recombination. Cleaves mobile four-strand junctions by introducing symmetrical nicks in paired strands. Promotes annealing of linear ssDNA with homologous dsDNA. Required for DNA repair, homologous recombination and chromosome segregation. This chain is Holliday junction resolvase RecU, found in Streptococcus pneumoniae serotype 2 (strain D39 / NCTC 7466).